The chain runs to 357 residues: Serpentine receptor class epsilon-30 (357 aa).

The next 7 membrane-spanning stretches (helical) occupy residues 31–51 (IFELSSCILCGYILNLSIFVM), 61–81 (LMFLTVPLFAIWHELIIGKFI), 121–141 (LLIFGGFLQWHTIYSIVFGIL), 165–185 (IPIILTIISQLLSISISLAII), 192–212 (FLARLPFVICAPLSVLVFLFI), 253–273 (LVVVVIFYISICGFGIAALTF), and 283–303 (LIENFLFLHPYPICLTAMFSI).

The protein belongs to the nematode receptor-like protein sre family.

It is found in the membrane. The sequence is that of Serpentine receptor class epsilon-30 (sre-30) from Caenorhabditis elegans.